Here is a 1080-residue protein sequence, read N- to C-terminus: Carbamoyl phosphate synthase large chain (1080 aa).

Residues 1-403 (MPKRTDLKTI…SLQKALRGLE (403 aa)) form a carboxyphosphate synthetic domain region. ATP is bound by residues arginine 129, arginine 169, glycine 175, glycine 176, glutamate 208, valine 210, glutamate 215, glycine 241, valine 242, histidine 243, glutamine 285, and glutamate 299. Residues 133-328 (RVAMGEIGLD…IAKVAAKLAV (196 aa)) form the ATP-grasp 1 domain. The Mg(2+) site is built by glutamine 285, glutamate 299, and asparagine 301. The Mn(2+) site is built by glutamine 285, glutamate 299, and asparagine 301. An oligomerization domain region spans residues 404–554 (TGKIGLDPTG…YSTYEDECEA (151 aa)). The segment at 555 to 942 (LPSNRDKIMI…AFARAQEAGG (388 aa)) is carbamoyl phosphate synthetic domain. Residues 679–876 (QQLVDKLGLK…LAKIAARCMA (198 aa)) form the ATP-grasp 2 domain. Positions 715, 754, 756, 761, 787, 788, 789, 790, 830, and 847 each coordinate ATP. Residues glutamine 830, glutamate 847, and asparagine 849 each coordinate Mg(2+). Positions 830, 847, and 849 each coordinate Mn(2+). An MGS-like domain is found at 943–1080 (IKAPPLGKAF…LQELHKELEA (138 aa)). The tract at residues 943–1080 (IKAPPLGKAF…LQELHKELEA (138 aa)) is allosteric domain.

This sequence belongs to the CarB family. In terms of assembly, composed of two chains; the small (or glutamine) chain promotes the hydrolysis of glutamine to ammonia, which is used by the large (or ammonia) chain to synthesize carbamoyl phosphate. Tetramer of heterodimers (alpha,beta)4. The cofactor is Mg(2+). Requires Mn(2+) as cofactor.

It carries out the reaction hydrogencarbonate + L-glutamine + 2 ATP + H2O = carbamoyl phosphate + L-glutamate + 2 ADP + phosphate + 2 H(+). The enzyme catalyses hydrogencarbonate + NH4(+) + 2 ATP = carbamoyl phosphate + 2 ADP + phosphate + 2 H(+). Its pathway is amino-acid biosynthesis; L-arginine biosynthesis; carbamoyl phosphate from bicarbonate: step 1/1. The protein operates within pyrimidine metabolism; UMP biosynthesis via de novo pathway; (S)-dihydroorotate from bicarbonate: step 1/3. Its function is as follows. Large subunit of the glutamine-dependent carbamoyl phosphate synthetase (CPSase). CPSase catalyzes the formation of carbamoyl phosphate from the ammonia moiety of glutamine, carbonate, and phosphate donated by ATP, constituting the first step of 2 biosynthetic pathways, one leading to arginine and/or urea and the other to pyrimidine nucleotides. The large subunit (synthetase) binds the substrates ammonia (free or transferred from glutamine from the small subunit), hydrogencarbonate and ATP and carries out an ATP-coupled ligase reaction, activating hydrogencarbonate by forming carboxy phosphate which reacts with ammonia to form carbamoyl phosphate. The polypeptide is Carbamoyl phosphate synthase large chain (Xanthomonas campestris pv. campestris (strain ATCC 33913 / DSM 3586 / NCPPB 528 / LMG 568 / P 25)).